The sequence spans 160 residues: uncharacterized protein (160 aa).

This is an uncharacterized protein from Methanocaldococcus jannaschii (strain ATCC 43067 / DSM 2661 / JAL-1 / JCM 10045 / NBRC 100440) (Methanococcus jannaschii).